Reading from the N-terminus, the 312-residue chain is Olfactory receptor-like protein COR4 (312 aa).

Residues 1–26 (MASGNCTTPTTFILSGLTDNPGLQMP) are Extracellular-facing. N-linked (GlcNAc...) asparagine glycosylation occurs at Asn5. Residues 27–49 (LFMVFLAIYTITLLTNLGLIALI) form a helical membrane-spanning segment. The Cytoplasmic portion of the chain corresponds to 50-57 (SVDLHLQT). The helical transmembrane segment at 58 to 79 (PMYIFLQNLSFTDAAYSTVITP) threads the bilayer. Over 80–100 (KMLATFLEERKTISYIGCILQ) the chain is Extracellular. An intrachain disulfide couples Cys97 to Cys179. Residues 101–120 (YFSFVLLTVTESLLLAVMAY) form a helical membrane-spanning segment. At 121-139 (DRYVAICKPLLYPSIMTKA) the chain is on the cytoplasmic side. A helical transmembrane segment spans residues 140-164 (VCWRLVKGLYSLAFLNSLVHTSGLL). Over 165–205 (KLSFCSSNVVNHFFCDNSPLFQISSSSTTLNELLVFIFGSL) the chain is Extracellular. The chain crosses the membrane as a helical span at residues 206 to 226 (FAMSSIITILISYVFIILTVV). Residues 227-239 (RIRSKDGKYKAFS) lie on the Cytoplasmic side of the membrane. A helical membrane pass occupies residues 240-260 (TCTSHLMAVSLFHGTVIFMYL). Topologically, residues 261 to 271 (RPVKLFSLDTD) are extracellular. A helical transmembrane segment spans residues 272–292 (KIASLFYTVVIPMLNPLIYSW). At 293–312 (RNKEVKDALRRVIATNVWIH) the chain is on the cytoplasmic side.

This sequence belongs to the G-protein coupled receptor 1 family.

It is found in the cell membrane. In terms of biological role, odorant receptor. The sequence is that of Olfactory receptor-like protein COR4 (COR4) from Gallus gallus (Chicken).